Reading from the N-terminus, the 280-residue chain is MWFLTTLLLWVPVDGQVDTTKAVITLQPPWVSVFQEETVTLHCEVLHLPGSSSTQWFLNGTATQTSTPSYRITSASVNDSGEYRCQRGLSGRSDPIQLEIHRGWLLLQVSSRVFMEGEPLALRCHAWKDKLVYNVLYYRNGKAFKFFHWNSNLTILKTNISHNGTYHCSGMGKHRYTSAGISQYTVKGLQLPTPVWFHVLFYLAVGIMFLVNTVLWVTIRKELKRKKKWNLEISLDSGHEKKVISSLQEDRHLEEELKCQEQKEEQLQEGVHRKEPQGAT.

Residues 1-15 form the signal peptide; it reads MWFLTTLLLWVPVDG. Residues 16-198 are Extracellular-facing; sequence QVDTTKAVIT…LQLPTPVWFH (183 aa). 2 Ig-like C2-type domains span residues 22-101 and 95-184; these read AVIT…LEIH and PIQL…ISQY. Disulfide bonds link cysteine 43–cysteine 85 and cysteine 124–cysteine 168. 3 N-linked (GlcNAc...) asparagine glycosylation sites follow: asparagine 59, asparagine 152, and asparagine 163. The helical transmembrane segment at 199–219 threads the bilayer; the sequence is VLFYLAVGIMFLVNTVLWVTI. Over 220–280 the chain is Cytoplasmic; it reads RKELKRKKKW…VHRKEPQGAT (61 aa). The segment at 258–280 is disordered; the sequence is KCQEQKEEQLQEGVHRKEPQGAT.

This sequence belongs to the immunoglobulin superfamily. FCGR1 family.

It is found in the cell membrane. Functionally, may bind to the Fc region of immunoglobulins gamma with a low affinity compared to FCGR1A. May function in the humoral immune response. The chain is Putative high affinity immunoglobulin gamma Fc receptor IB from Homo sapiens (Human).